The sequence spans 1498 residues: ATP-binding cassette sub-family C member 6 (1498 aa).

Residues 1–37 (MNRGRSMATPGEQCAGLRVWNQTEQEPAAYHLLSLCF) lie on the Extracellular side of the membrane. Asn21 carries an N-linked (GlcNAc...) asparagine glycan. A helical transmembrane segment spans residues 38–58 (VRAASSWVPPMYLWVLGPIYL). Residues 59 to 78 (LYIHRHGRCYLRMSHLFKTK) lie on the Cytoplasmic side of the membrane. A helical membrane pass occupies residues 79–99 (MVLGLALILLYTFNVAVPLWR). Over 100-104 (IHQGV) the chain is Extracellular. The chain crosses the membrane as a helical span at residues 105-125 (PQAPELLIHPTVWLTTMSFAT). The Cytoplasmic segment spans residues 126–137 (FLIHMERRKGVR). A helical transmembrane segment spans residues 138–155 (SSGVLFGYWLLCCILPGI). Over 156 to 173 (NTVQQASAGNFRQEPLHH) the chain is Extracellular. A helical transmembrane segment spans residues 174 to 194 (LATYLCLSLVVAELVLSCLVD). Residues 195–300 (QPPFFSEDSQ…RSQRGPLLRA (106 aa)) are Cytoplasmic-facing. The helical transmembrane segment at 301-321 (IWRVFRSTFLLGTLSLVISDA) threads the bilayer. The ABC transmembrane type-1 1 domain occupies 309-592 (FLLGTLSLVI…LPFSVHCIVQ (284 aa)). At 322–347 (FRFAVPKLLSLFLEFMGDRNSSAWTG) the chain is on the extracellular side. Asn341 is a glycosylation site (N-linked (GlcNAc...) asparagine). The helical transmembrane segment at 348–368 (WLLAVLMFAAACLQTLFEQQH) threads the bilayer. The Cytoplasmic segment spans residues 369 to 424 (MYRAKVLQMRLRTAITGLVYRKVLVLSSGSRKSSAAGDVVNLVSVDIQRLAESIIY). A helical membrane pass occupies residues 425-445 (LNGLWLLFLWIFVCFVYLWQL). At 446–448 (LGP) the chain is on the extracellular side. The helical transmembrane segment at 449 to 469 (SALTAVAVFLSLLPLNFFITK) threads the bilayer. The Cytoplasmic portion of the chain corresponds to 470-531 (KRGFHQEEQM…ALKTSTLLFS (62 aa)). The helical transmembrane segment at 532 to 552 (VSLVSFQVSTFLVALVVFAVH) threads the bilayer. Residues 553 to 574 (TLVAEDNAMDAEKAFVTLTVLS) lie on the Extracellular side of the membrane. A helical transmembrane segment spans residues 575–595 (ILNKAQAFLPFSVHCIVQARV). Over 596 to 934 (SFDRLAAFLC…VKTTIYLSYL (339 aa)) the chain is Cytoplasmic. The 225-residue stretch at 627–851 (ISVHNGTFAW…NGALVGLLDG (225 aa)) folds into the ABC transporter 1 domain. 661 to 668 (GPVGAGKS) serves as a coordination point for ATP. A disordered region spans residues 855 to 910 (PAGTHDAATSDDLGGFPGGGRPTCRPDRPRPTEAAPVKGRSTSEVQMEASLDDPEA). A helical transmembrane segment spans residues 935 to 955 (RAVGTPLCTYTLFLFLCQQVA). The ABC transmembrane type-1 2 domain maps to 942-1223 (CTYTLFLFLC…VVRSWTDLEN (282 aa)). Topologically, residues 956 to 992 (SFSQGYWLSLWADDPVVDGRQMHAALRGWVFGLLGCL) are extracellular. A helical transmembrane segment spans residues 993–1013 (QAIGLFASMAAVFLGGARASG). Residues 1014-1056 (LLFRSLLWDVARSPIGFFERTPVGNLLNRFSKETDTVDVDIPD) are Cytoplasmic-facing. Residues 1057–1077 (KLRSLLTYAFGLLEVGLAVTM) form a helical membrane-spanning segment. Residue Ala1078 is a topological domain, extracellular. A helical membrane pass occupies residues 1079-1099 (TPLAIVAILPLMVLYAGFQSL). Residues 1100 to 1170 (YVATSCQLRR…VADRWLATNL (71 aa)) are Cytoplasmic-facing. Residues 1171–1191 (ELLGNGLVFVAATCAVLSKAH) form a helical membrane-spanning segment. The Extracellular segment spans residues 1192–1193 (LS). The chain crosses the membrane as a helical span at residues 1194-1214 (AGLVGFSVSAALQVTQTLQWV). Residues 1215 to 1498 (VRSWTDLENS…YRLAHESGLA (284 aa)) lie on the Cytoplasmic side of the membrane. The ABC transporter 2 domain maps to 1260-1494 (IEFRDFGLRH…KGLFYRLAHE (235 aa)). Phosphoserine is present on Ser1281. 1294 to 1301 (GRTGAGKS) is a binding site for ATP.

It belongs to the ABC transporter superfamily. ABCC family. Conjugate transporter (TC 3.A.1.208) subfamily. In terms of processing, glycosylated.

The protein resides in the basolateral cell membrane. The protein localises to the basal cell membrane. The enzyme catalyses an S-substituted glutathione(in) + ATP + H2O = an S-substituted glutathione(out) + ADP + phosphate + H(+). It carries out the reaction leukotriene C4(in) + ATP + H2O = leukotriene C4(out) + ADP + phosphate + H(+). Functionally, ATP-dependent transporter of the ATP-binding cassette (ABC) family that actively extrudes physiological compounds, and xenobiotics from cells. Mediates ATP-dependent transport of glutathione conjugates such as leukotriene-c4 (LTC4) and N-ethylmaleimide S-glutathione (NEM-GS) (in vitro), and an anionic cyclopentapeptide endothelin antagonist, BQ-123. May contribute to regulate the transport of organic compounds in testes across the blood-testis-barrier. Mediates the release of nucleoside triphosphates, predominantly ATP, into the circulation, where it is rapidly converted into AMP and the mineralization inhibitor inorganic pyrophosphate (PPi) by the ecto-enzyme ectonucleotide pyrophosphatase phosphodiesterase 1 (ENPP1), therefore playing a role in PPi homeostasis. This Mus musculus (Mouse) protein is ATP-binding cassette sub-family C member 6 (Abcc6).